Here is a 378-residue protein sequence, read N- to C-terminus: UPF0754 membrane protein BC_0879 (378 aa).

The chain crosses the membrane as a helical span at residues 357–377 (YLGALLGGMIGLVQGLLLLFL).

This sequence belongs to the UPF0754 family.

It is found in the cell membrane. This chain is UPF0754 membrane protein BC_0879, found in Bacillus cereus (strain ATCC 14579 / DSM 31 / CCUG 7414 / JCM 2152 / NBRC 15305 / NCIMB 9373 / NCTC 2599 / NRRL B-3711).